We begin with the raw amino-acid sequence, 197 residues long: Imidazoleglycerol-phosphate dehydratase (197 aa).

This sequence belongs to the imidazoleglycerol-phosphate dehydratase family.

It localises to the cytoplasm. The catalysed reaction is D-erythro-1-(imidazol-4-yl)glycerol 3-phosphate = 3-(imidazol-4-yl)-2-oxopropyl phosphate + H2O. It functions in the pathway amino-acid biosynthesis; L-histidine biosynthesis; L-histidine from 5-phospho-alpha-D-ribose 1-diphosphate: step 6/9. The sequence is that of Imidazoleglycerol-phosphate dehydratase from Pseudomonas fluorescens (strain Pf0-1).